We begin with the raw amino-acid sequence, 60 residues long: Single-pass membrane and coiled-coil domain-containing protein 4 homolog (60 aa).

Residues 1 to 21 (MRKLRGGQTKETRKQKQERRE) form a disordered region. Basic and acidic residues predominate over residues 8 to 21 (QTKETRKQKQERRE). Residues 10–33 (KETRKQKQERREENLKIQQQLKTI) are a coiled coil. Residues 32 to 52 (TIVLPICGVFLMCIVVYVFLK) traverse the membrane as a helical segment.

Belongs to the SMCO4 family.

It localises to the membrane. This Aedes aegypti (Yellowfever mosquito) protein is Single-pass membrane and coiled-coil domain-containing protein 4 homolog.